Here is a 213-residue protein sequence, read N- to C-terminus: RPW8-like protein 3 (213 aa).

One can recognise an RPW8 domain in the interval 1–153 (MPVSEIMAGA…ITRQPTDCIC (153 aa)). The chain crosses the membrane as a helical span at residues 7 to 23 (MAGAALGLALQVLHDAI). Coiled coils occupy residues 70–93 (EDLKHLLEKAVSLVEAYAELRRRN) and 125–147 (VDIKELMAKMSEMNTKLDEITRQ). A glycan (N-linked (GlcNAc...) asparagine) is linked at Asn-157.

This sequence belongs to the plant RPW8 protein family.

The protein localises to the membrane. In terms of biological role, probable disease resistance (R) protein. This Arabidopsis thaliana (Mouse-ear cress) protein is RPW8-like protein 3.